A 252-amino-acid chain; its full sequence is Phosphoribosylformylglycinamidine synthase subunit PurQ (252 aa).

Residues 6–237 (VGVVVFPGSN…FAHLAGTKRS (232 aa)) form the Glutamine amidotransferase type-1 domain. The active-site Nucleophile is cysteine 89. Residues histidine 206 and glutamate 208 contribute to the active site.

In terms of assembly, part of the FGAM synthase complex composed of 1 PurL, 1 PurQ and 2 PurS subunits.

The protein localises to the cytoplasm. The catalysed reaction is N(2)-formyl-N(1)-(5-phospho-beta-D-ribosyl)glycinamide + L-glutamine + ATP + H2O = 2-formamido-N(1)-(5-O-phospho-beta-D-ribosyl)acetamidine + L-glutamate + ADP + phosphate + H(+). It carries out the reaction L-glutamine + H2O = L-glutamate + NH4(+). It functions in the pathway purine metabolism; IMP biosynthesis via de novo pathway; 5-amino-1-(5-phospho-D-ribosyl)imidazole from N(2)-formyl-N(1)-(5-phospho-D-ribosyl)glycinamide: step 1/2. Functionally, part of the phosphoribosylformylglycinamidine synthase complex involved in the purines biosynthetic pathway. Catalyzes the ATP-dependent conversion of formylglycinamide ribonucleotide (FGAR) and glutamine to yield formylglycinamidine ribonucleotide (FGAM) and glutamate. The FGAM synthase complex is composed of three subunits. PurQ produces an ammonia molecule by converting glutamine to glutamate. PurL transfers the ammonia molecule to FGAR to form FGAM in an ATP-dependent manner. PurS interacts with PurQ and PurL and is thought to assist in the transfer of the ammonia molecule from PurQ to PurL. In Chlorobaculum parvum (strain DSM 263 / NCIMB 8327) (Chlorobium vibrioforme subsp. thiosulfatophilum), this protein is Phosphoribosylformylglycinamidine synthase subunit PurQ.